We begin with the raw amino-acid sequence, 111 residues long: uncharacterized protein (111 aa).

An HIT domain is found at 4-111 (IFERIIEGAV…LGGGLLGSIA (108 aa)). The Histidine triad motif motif lies at 96–100 (HLHIH).

This is an uncharacterized protein from Chlamydia trachomatis serovar D (strain ATCC VR-885 / DSM 19411 / UW-3/Cx).